The sequence spans 470 residues: 3-isopropylmalate dehydratase large subunit (470 aa).

Positions 348, 409, and 412 each coordinate [4Fe-4S] cluster.

The protein belongs to the aconitase/IPM isomerase family. LeuC type 1 subfamily. Heterodimer of LeuC and LeuD. [4Fe-4S] cluster serves as cofactor.

The catalysed reaction is (2R,3S)-3-isopropylmalate = (2S)-2-isopropylmalate. Its pathway is amino-acid biosynthesis; L-leucine biosynthesis; L-leucine from 3-methyl-2-oxobutanoate: step 2/4. Catalyzes the isomerization between 2-isopropylmalate and 3-isopropylmalate, via the formation of 2-isopropylmaleate. This is 3-isopropylmalate dehydratase large subunit from Thioalkalivibrio sulfidiphilus (strain HL-EbGR7).